The sequence spans 231 residues: tRNA (guanine-N(1)-)-methyltransferase (231 aa).

S-adenosyl-L-methionine contacts are provided by residues glycine 109 and 133–138 (IGDYVL).

This sequence belongs to the RNA methyltransferase TrmD family. In terms of assembly, homodimer.

Its subcellular location is the cytoplasm. It carries out the reaction guanosine(37) in tRNA + S-adenosyl-L-methionine = N(1)-methylguanosine(37) in tRNA + S-adenosyl-L-homocysteine + H(+). In terms of biological role, specifically methylates guanosine-37 in various tRNAs. This is tRNA (guanine-N(1)-)-methyltransferase from Nocardia farcinica (strain IFM 10152).